The primary structure comprises 102 residues: Sulfur globule protein CV3 (102 aa).

An N-terminal signal peptide occupies residues 1-25 (MTMKRLLLVSTLAGASALATLPANA).

In terms of assembly, the protein envelope of the sulfur globules is composed of the three different proteins CV1, CV2 and CV3.

Its function is as follows. Structural protein of the sulfur globules, which are intracellular globules that serve for sulfur storage in purple sulfur bacteria. This is Sulfur globule protein CV3 (sgpC) from Allochromatium vinosum (strain ATCC 17899 / DSM 180 / NBRC 103801 / NCIMB 10441 / D) (Chromatium vinosum).